A 1037-amino-acid polypeptide reads, in one-letter code: Mediator of RNA polymerase II transcription subunit 14 (1037 aa).

This sequence belongs to the Mediator complex subunit 14 family. As to quaternary structure, component of the Mediator complex.

The protein localises to the nucleus. In terms of biological role, component of the Mediator complex, a coactivator involved in the regulated transcription of nearly all RNA polymerase II-dependent genes. Mediator functions as a bridge to convey information from gene-specific regulatory proteins to the basal RNA polymerase II transcription machinery. Mediator is recruited to promoters by direct interactions with regulatory proteins and serves as a scaffold for the assembly of a functional preinitiation complex with RNA polymerase II and the general transcription factors. This is Mediator of RNA polymerase II transcription subunit 14 (RGR1) from Candida glabrata (strain ATCC 2001 / BCRC 20586 / JCM 3761 / NBRC 0622 / NRRL Y-65 / CBS 138) (Yeast).